Reading from the N-terminus, the 267-residue chain is Palmitoyltransferase ZDHHC12 (267 aa).

Residues 1–9 are Cytoplasmic-facing; that stretch reads MALWPPLNS. The helical transmembrane segment at 10-30 threads the bilayer; the sequence is GMLVRTGHTVLTWGITLVLFL. Residues 31 to 43 are Lumenal-facing; sequence HDTELRQWEEQGE. A helical transmembrane segment spans residues 44 to 64; that stretch reads LLLPLTFLLLVLSSLLLYLAV. Residues 65–140 lie on the Cytoplasmic side of the membrane; sequence SLMDPGYVTT…ENCVGERNHP (76 aa). Positions 97-147 constitute a DHHC domain; it reads RRCRHCLVLQPLRARHCRDCRRCVRRYDHHCPWMENCVGERNHPLFVAYLA. Cys127 (S-palmitoyl cysteine intermediate) is an active-site residue. A helical membrane pass occupies residues 141 to 161; sequence LFVAYLALQLVVLLWGLCLAW. The Lumenal segment spans residues 162–178; the sequence is SGLQFFQPWGLWLRSTG. The helical transmembrane segment at 179-199 threads the bilayer; that stretch reads LLFTTFLLLSFFALVVALLLA. Topologically, residues 200–267 are cytoplasmic; it reads SHLYLVARNT…EEEEGSSQVV (68 aa).

This sequence belongs to the DHHC palmitoyltransferase family.

The protein resides in the golgi apparatus membrane. The protein localises to the endoplasmic reticulum membrane. It catalyses the reaction L-cysteinyl-[protein] + hexadecanoyl-CoA = S-hexadecanoyl-L-cysteinyl-[protein] + CoA. Its function is as follows. Palmitoyltransferase that catalyzes the addition of palmitate onto various protein substrates. Has a palmitoyltransferase activity toward gephyrin/GPHN, regulating its clustering at synapses and its function in gamma-aminobutyric acid receptor clustering. Thereby, indirectly regulates GABAergic synaptic transmission. Negatively regulates NLRP3-driven inflammation. Catalyzes NLRP3 palmitoylation, leading to its degradation via the chaperone-mediated autophagy (CMA) process. In Mus musculus (Mouse), this protein is Palmitoyltransferase ZDHHC12.